A 373-amino-acid polypeptide reads, in one-letter code: Ubiquitin carboxyl-terminal hydrolase 50 (373 aa).

A USP domain is found at 44 to 364; the sequence is TGLRNLGNTC…TAYLLFYSCQ (321 aa). Residue C53 is the Nucleophile of the active site. The active-site Proton acceptor is the H322.

The protein belongs to the peptidase C19 family.

It is found in the cytoplasm. The protein resides in the cytoskeleton. Its subcellular location is the microtubule organizing center. It localises to the centrosome. The protein localises to the nucleus. The catalysed reaction is Thiol-dependent hydrolysis of ester, thioester, amide, peptide and isopeptide bonds formed by the C-terminal Gly of ubiquitin (a 76-residue protein attached to proteins as an intracellular targeting signal).. Deubiquitinating enzyme that removes conjugated ubiquitin from specific proteins to regulate different cellular processes. Regulates the inflammasome signaling pathway by deubiquitinating 'Lys-63'-linked polyubiquitination of the PYCARD/ASC adapter protein. Regulates the ubiquitination and stability of the ACE2 protein. Acts as a negative regulator of the G2/M checkpoint pathway, by preventing serine/threonine kinase WEE1 degradation, thereby repressing entry into mitosis following activation of the G2/M DNA damage checkpoint. This is Ubiquitin carboxyl-terminal hydrolase 50 (USP50) from Macaca fascicularis (Crab-eating macaque).